The following is a 541-amino-acid chain: Cytochrome bc1 complex cytochrome b subunit (541 aa).

A helical membrane pass occupies residues 36-56; sequence FLLGEIALYSFIILILTGVYL. Residues His105 and His119 each contribute to the heme site. Transmembrane regions (helical) follow at residues 109 to 129, 137 to 157, and 169 to 189; these read ALMFVVSMMVHMMRIFFTGAF, WVIGVVLLILGIAEGFMGYSL, and IMSAIIVGLPIIGTWMHWMIF. The heme site is built by His206 and His221. The next 5 helical transmembrane spans lie at 207-227, 256-276, 325-345, 371-391, and 408-428; these read VLIIPGIILGLIAAHLALVWY, SVAFGAITLGFLSLLAGVTTI, VFWVAIMLGILVVLLIAYPWI, LGVMALIFYILLTISGGNDIW, and IGLIVFPAIGYFVTYRLCIGL.

Belongs to the cytochrome b family. As to quaternary structure, the cytochrome bc1 complex is composed of a cytochrome b (QcrB), the Rieske protein iron-sulfur (QcrA) and a diheme cytochrome c (QcrC) subunit. Requires heme as cofactor.

The protein localises to the cell membrane. It catalyses the reaction a quinol + 2 Fe(III)-[cytochrome c](out) = a quinone + 2 Fe(II)-[cytochrome c](out) + 2 H(+)(out). In terms of biological role, cytochrome b subunit of the cytochrome bc1 complex, an essential component of the respiratory electron transport chain required for ATP synthesis. The bc1 complex catalyzes the oxidation of menaquinol and the reduction of cytochrome c in the respiratory chain. The bc1 complex operates through a Q-cycle mechanism that couples electron transfer to generation of the proton gradient that drives ATP synthesis. The protein is Cytochrome bc1 complex cytochrome b subunit (qcrB) of Corynebacterium efficiens (strain DSM 44549 / YS-314 / AJ 12310 / JCM 11189 / NBRC 100395).